A 246-amino-acid chain; its full sequence is NAD-dependent protein deacylase (246 aa).

Positions 1 to 246 constitute a Deacetylase sirtuin-type domain; it reads MDLSQARAAL…RGLELLLEDD (246 aa). 21 to 41 contacts NAD(+); it reads GAGISAESGIPTFRDAQTGHW. Substrate-binding residues include Tyr-66 and Arg-69. 101–104 lines the NAD(+) pocket; sequence QNVD. His-123 functions as the Proton acceptor in the catalytic mechanism. Residues 191–193, 217–219, and Ala-235 contribute to the NAD(+) site; these read GTS and NPE.

This sequence belongs to the sirtuin family. Class III subfamily.

It is found in the cytoplasm. The enzyme catalyses N(6)-acetyl-L-lysyl-[protein] + NAD(+) + H2O = 2''-O-acetyl-ADP-D-ribose + nicotinamide + L-lysyl-[protein]. It catalyses the reaction N(6)-succinyl-L-lysyl-[protein] + NAD(+) + H2O = 2''-O-succinyl-ADP-D-ribose + nicotinamide + L-lysyl-[protein]. Its function is as follows. NAD-dependent lysine deacetylase and desuccinylase that specifically removes acetyl and succinyl groups on target proteins. Modulates the activities of several proteins which are inactive in their acylated form. The chain is NAD-dependent protein deacylase from Deinococcus radiodurans (strain ATCC 13939 / DSM 20539 / JCM 16871 / CCUG 27074 / LMG 4051 / NBRC 15346 / NCIMB 9279 / VKM B-1422 / R1).